Consider the following 154-residue polypeptide: Transcriptional repressor NrdR (154 aa).

The segment at 3–34 (CPFCGANDTKVIDSRLVAEGEQVRRRRECLAC) is a zinc-finger region. The ATP-cone domain maps to 49 to 139 (PRLIKQDGSR…VYRRFQDLNE (91 aa)).

It belongs to the NrdR family. The cofactor is Zn(2+).

Functionally, negatively regulates transcription of bacterial ribonucleotide reductase nrd genes and operons by binding to NrdR-boxes. The polypeptide is Transcriptional repressor NrdR (Pseudomonas syringae pv. syringae (strain B728a)).